The sequence spans 1100 residues: ATP-dependent DNA helicase mph1 (1100 aa).

The segment covering 1–21 (MSDSDDYLQDDPDDQAFDDFA) has biased composition (acidic residues). A disordered region spans residues 1–250 (MSDSDDYLQD…RPSSFMQSSN (250 aa)). Over residues 38 to 61 (RNQTRNTTSRRNEDNSVASDSDSF) the composition is skewed to low complexity. Residues 84-94 (FADHPENEASS) are compositionally biased toward basic and acidic residues. Polar residues predominate over residues 104-117 (NNPQENIFVTQLTQ). The span at 135–146 (PPPPPPPAPTKP) shows a compositional bias: pro residues. Polar residues-rich tracts occupy residues 182 to 191 (RLSFSTAQNS) and 200 to 209 (NAPTNTAQTE). Residues 212 to 223 (DFLDDIPDDAFD) show a composition bias toward acidic residues. Positions 237–249 (SNSSRPSSFMQSS) are enriched in low complexity. Residues 317 to 485 (ITQKGLFHNL…AVIDGLEISK (169 aa)) form the Helicase ATP-binding domain. 330–337 (LPTGLGKT) serves as a coordination point for ATP. The DEAH box motif lies at 433–436 (DEAH). The 175-residue stretch at 655–829 (YLKQVVLNHF…GTRFTFHDDK (175 aa)) folds into the Helicase C-terminal domain. Disordered regions lie at residues 850 to 913 (PEEN…PEPV) and 1003 to 1100 (RRPA…LGRR). Basic residues-rich tracts occupy residues 863–875 (RRGRVPKKPPKKF) and 1019–1028 (GNKKRLRKGR). Polar residues predominate over residues 1053-1066 (QPISPEQLLSSFTD). Acidic residues predominate over residues 1082 to 1092 (LELDADFEAPD).

Belongs to the DEAD box helicase family. DEAH subfamily. FANCM sub-subfamily. In terms of assembly, interacts with the MHF histone-fold complex to form the FANCM-MHF complex.

It is found in the nucleus. It carries out the reaction ATP + H2O = ADP + phosphate + H(+). Its function is as follows. ATP-dependent DNA helicase involved in DNA damage repair by homologous recombination and in genome maintenance. Capable of unwinding D-loops. Plays a role in limiting crossover recombinants during mitotic DNA double-strand break (DSB) repair. Component of a FANCM-MHF complex which promotes gene conversion at blocked replication forks, probably by reversal of the stalled fork. The protein is ATP-dependent DNA helicase mph1 of Aspergillus terreus (strain NIH 2624 / FGSC A1156).